The primary structure comprises 318 residues: NADH-ubiquinone oxidoreductase chain 1 (318 aa).

8 consecutive transmembrane segments (helical) span residues 2-22 (FMVN…FLTL), 76-96 (TLAL…HPLI), 98-118 (FNLG…SILW), 140-160 (ISYE…SGSF), 171-191 (HSWL…STLA), 217-237 (AGSF…MNAL), 253-273 (ELYT…FLWI), and 294-314 (LPLT…TSGI).

This sequence belongs to the complex I subunit 1 family. Core subunit of respiratory chain NADH dehydrogenase (Complex I) which is composed of 45 different subunits.

The protein resides in the mitochondrion inner membrane. The catalysed reaction is a ubiquinone + NADH + 5 H(+)(in) = a ubiquinol + NAD(+) + 4 H(+)(out). Core subunit of the mitochondrial membrane respiratory chain NADH dehydrogenase (Complex I) which catalyzes electron transfer from NADH through the respiratory chain, using ubiquinone as an electron acceptor. Essential for the catalytic activity and assembly of complex I. This Ateles paniscus (Black spider monkey) protein is NADH-ubiquinone oxidoreductase chain 1 (MT-ND1).